The primary structure comprises 710 residues: Prolyl endopeptidase (710 aa).

Position 1 is an N-acetylmethionine (methionine 1). Lysine 157 carries the post-translational modification N6-acetyllysine. Active-site charge relay system residues include serine 554, aspartate 641, and histidine 680.

This sequence belongs to the peptidase S9A family. The N-terminus is blocked. Ubiquitous.

The protein resides in the cytoplasm. It carries out the reaction Hydrolysis of Pro-|-Xaa &gt;&gt; Ala-|-Xaa in oligopeptides.. Functionally, cleaves peptide bonds on the C-terminal side of prolyl residues within peptides that are up to approximately 30 amino acids long. The sequence is that of Prolyl endopeptidase (PREP) from Sus scrofa (Pig).